Here is a 485-residue protein sequence, read N- to C-terminus: WD repeat-containing protein 13 (485 aa).

Phosphoserine occurs at positions 70, 74, and 79. The residue at position 114 (arginine 114) is an Asymmetric dimethylarginine; alternate. At arginine 114 the chain carries Omega-N-methylarginine; alternate. WD repeat units lie at residues 170 to 210, 215 to 254, 302 to 341, 406 to 446, and 451 to 484; these read HVDE…PTVL, GHTR…CIRE, KLTG…GKLT, HPVR…KAAV, and GHSA…RREQ.

The protein resides in the nucleus. In Pongo abelii (Sumatran orangutan), this protein is WD repeat-containing protein 13 (WDR13).